A 311-amino-acid polypeptide reads, in one-letter code: Dermonecrotic toxin (311 aa).

Positions 1-21 (MYVHLALILGCWTVVLQGAET) are cleaved as a signal peptide. The propeptide occupies 22–26 (DVGER). His-38 is a catalytic residue. Glu-58 and Asp-60 together coordinate Mg(2+). Catalysis depends on His-73, which acts as the Nucleophile. An intrachain disulfide couples Cys-77 to Cys-83. Asp-117 provides a ligand contact to Mg(2+).

The protein belongs to the arthropod phospholipase D family. Class I subfamily. Requires Mg(2+) as cofactor. As to expression, expressed by the venom gland.

Its subcellular location is the secreted. The catalysed reaction is an N-(acyl)-sphingosylphosphocholine = an N-(acyl)-sphingosyl-1,3-cyclic phosphate + choline. It catalyses the reaction an N-(acyl)-sphingosylphosphoethanolamine = an N-(acyl)-sphingosyl-1,3-cyclic phosphate + ethanolamine. It carries out the reaction a 1-acyl-sn-glycero-3-phosphocholine = a 1-acyl-sn-glycero-2,3-cyclic phosphate + choline. The enzyme catalyses a 1-acyl-sn-glycero-3-phosphoethanolamine = a 1-acyl-sn-glycero-2,3-cyclic phosphate + ethanolamine. Catalytic activity and hemolysis are inhibited by divalent ion chelators (1,10-phenanthroline, EDTA, and EGTA). In terms of biological role, dermonecrotic toxins cleave the phosphodiester linkage between the phosphate and headgroup of certain phospholipids (sphingolipid and lysolipid substrates), forming an alcohol (often choline) and a cyclic phosphate. This toxin acts on sphingomyelin (SM). It may also act on ceramide phosphoethanolamine (CPE), lysophosphatidylcholine (LPC) and lysophosphatidylethanolamine (LPE), but not on lysophosphatidylserine (LPS), and lysophosphatidylglycerol (LPG). It acts by transphosphatidylation, releasing exclusively cyclic phosphate products as second products. Shows complement-dependent hemolysis. Also induces dermonecrosis, vascular permeability, edema, inflammatory response, and platelet aggregation. This is Dermonecrotic toxin from Loxosceles laeta (South American recluse spider).